We begin with the raw amino-acid sequence, 564 residues long: Multidrug resistance protein 1 (564 aa).

The Cytoplasmic segment spans residues 1–115 (MHYRFLRDSF…NPQNWPTLQK (115 aa)). The segment at 60 to 101 (IDNQGEPNSSQSSSSNNTIVDNNNNNDNDVDGDKIVVTWDGD) is disordered. The span at 67 to 86 (NSSQSSSSNNTIVDNNNNND) shows a compositional bias: low complexity. A helical membrane pass occupies residues 116-136 (AFFIFQISFLTTSVYMGSAVY). At 137 to 151 (TPGIEELMHDFGIGR) the chain is on the extracellular side. A helical membrane pass occupies residues 152 to 172 (VVATLPLTLFVIGYGVGPLVF). At 173–183 (SPMSENAIFGR) the chain is on the cytoplasmic side. The helical transmembrane segment at 184 to 204 (TSIYIITLFLFVILQIPTALV) threads the bilayer. Over 205-206 (NN) the chain is Extracellular. Residues 207–227 (IAGLCILRFLGGFFASPCLAT) traverse the membrane as a helical segment. Residues 228–242 (GGASVADVVKFWNLP) lie on the Cytoplasmic side of the membrane. The chain crosses the membrane as a helical span at residues 243–263 (VGLAAWSLGAVCGPSFGPFFG). Over 264–273 (SILTVKASWR) the chain is Extracellular. Residues 274–294 (WTFWFMCIISGFSFVMLCFTL) form a helical membrane-spanning segment. The Cytoplasmic segment spans residues 295–350 (PETFGKTLLYRKAKRLRAITGNDRITSEGEVENSKMTSHELIIDTLWRPLEITVME). Residues 351–371 (PVVLLINIYIAMVYSILYLFF) traverse the membrane as a helical segment. At 372-390 (EVFPIYFVGVKHFTLVELG) the chain is on the extracellular side. A helical membrane pass occupies residues 391-411 (TTYMSIVIGIVIAAFIYIPVI). At 412–428 (RQKFTKPILRQEQVFPE) the chain is on the cytoplasmic side. The chain crosses the membrane as a helical span at residues 429-449 (VFIPIAIVGGILLTSGLFIFG). Residues 450 to 455 (WSANRT) are Extracellular-facing. N-linked (GlcNAc...) asparagine glycosylation is present at asparagine 453. Residues 456 to 476 (THWVGPLFGAATTASGAFLIF) traverse the membrane as a helical segment. Over 477–503 (QTLFNFMGASFKPHYIASVFASNDLFR) the chain is Cytoplasmic. Residues 504 to 524 (SVIASVFPLFGAPLFDNLATP) form a helical membrane-spanning segment. Topologically, residues 525-528 (EYPV) are extracellular. A helical membrane pass occupies residues 529–549 (AWGSSVLGFITLVMIAIPVLF). Over 550 to 564 (YLNGPKLRARSKYAN) the chain is Cytoplasmic.

The protein belongs to the major facilitator superfamily. CAR1 family.

The protein resides in the cell membrane. Functionally, plasma membrane multidrug efflux pump that confers resistance to numerous chemicals including azoles such as fluconazole, voriconazole, and benztriazoles, as well as to benomyl, cycloheximide, methotrexate, 4-nitroquinoline-N-oxide, sulfometuron methyl, cerulenin, and brefeldin A. This chain is Multidrug resistance protein 1, found in Candida albicans (strain SC5314 / ATCC MYA-2876) (Yeast).